A 412-amino-acid chain; its full sequence is Transcription factor NIGT1 (412 aa).

Disordered stretches follow at residues 54–241 (MDAA…RCWA), 286–310 (KYRLHTRRPSSTGQSSAAAGVPAPP), and 358–412 (AMLP…TTSA). The span at 90 to 112 (ESTHADAAKSGKKEEAETSERHS) shows a compositional bias: basic and acidic residues. Over residues 183-193 (ASSTTAAASST) the composition is skewed to low complexity. Positions 198 to 228 (SGDKPTDDDTEKHMETDKDNDKDAKDKDKEG) are enriched in basic and acidic residues. One can recognise an HTH myb-type domain in the interval 232 to 292 (PHRKPRRCWA…HLQKYRLHTR (61 aa)). A DNA-binding region (H-T-H motif) is located at residues 263–288 (PKQIRELMKVDGLTNDEVKSHLQKYR). The span at 383–392 (SGSEGRRSGD) shows a compositional bias: basic and acidic residues. The span at 395-412 (DGSSSSPAVSSSSQTTSA) shows a compositional bias: low complexity.

The protein resides in the nucleus. Functionally, transcriptional repressor that may play a role in response to nitrogen. May be involved in a time-dependent signaling for transcriptional regulation of nitrate-responsive genes. Binds specifically to the DNA sequence motif 5'-GAATC-3' or 5'-GAATATTC-3'. Represses the activity of its own promoter trough binding to these motifs. The sequence is that of Transcription factor NIGT1 from Oryza sativa subsp. japonica (Rice).